Consider the following 215-residue polypeptide: Sperm acrosome membrane-associated protein 3 (215 aa).

The Cytoplasmic portion of the chain corresponds to methionine 1 to arginine 63. The helical; Signal-anchor for type II membrane protein transmembrane segment at tryptophan 64–serine 84 threads the bilayer. The Extracellular segment spans residues serine 85–phenylalanine 215. Residues lysine 88–phenylalanine 215 enclose the C-type lysozyme domain. 4 disulfide bridges follow: cysteine 93/cysteine 213, cysteine 117/cysteine 201, cysteine 151/cysteine 166, and cysteine 162/cysteine 180.

This sequence belongs to the glycosyl hydrolase 22 family. In terms of assembly, interacts with ASTL. The processed form derives from the membrane form by proteolytic processing. The processed form is expressed in sperm (at protein level). Expressed in testis, epididymis and placenta.

It localises to the cytoplasmic vesicle. Its subcellular location is the secretory vesicle. It is found in the acrosome membrane. The protein resides in the secreted. Functionally, sperm surface membrane protein that may be involved in sperm-egg plasma membrane adhesion and fusion during fertilization. It could be a potential receptor for the egg oligosaccharide residue N-acetylglucosamine, which is present in the extracellular matrix over the egg plasma membrane. The processed form has no detectable bacteriolytic activity in vitro. In Homo sapiens (Human), this protein is Sperm acrosome membrane-associated protein 3 (SPACA3).